The primary structure comprises 305 residues: Nitrogen assimilation regulatory protein nac (305 aa).

The HTH lysR-type domain maps to Met1–Thr58. A DNA-binding region (H-T-H motif) is located at residues Leu18 to Ala37.

The protein belongs to the LysR transcriptional regulatory family.

In terms of biological role, transcriptional activator for the hut, put and ure operons and repressor for the gdh and gltB operons in response to nitrogen limitation. Negative regulator of its own expression. In Escherichia coli (strain K12), this protein is Nitrogen assimilation regulatory protein nac (nac).